Reading from the N-terminus, the 698-residue chain is Elongation factor G 1 (698 aa).

The tr-type G domain maps to 8 to 290; sequence ERYRNIGIVA…AVVDFLPAPI (283 aa). GTP-binding positions include 17 to 24, 88 to 92, and 142 to 145; these read AHVDAGKT, DTPGH, and NKMD.

This sequence belongs to the TRAFAC class translation factor GTPase superfamily. Classic translation factor GTPase family. EF-G/EF-2 subfamily.

Its subcellular location is the cytoplasm. In terms of biological role, catalyzes the GTP-dependent ribosomal translocation step during translation elongation. During this step, the ribosome changes from the pre-translocational (PRE) to the post-translocational (POST) state as the newly formed A-site-bound peptidyl-tRNA and P-site-bound deacylated tRNA move to the P and E sites, respectively. Catalyzes the coordinated movement of the two tRNA molecules, the mRNA and conformational changes in the ribosome. The sequence is that of Elongation factor G 1 from Shewanella frigidimarina (strain NCIMB 400).